Consider the following 219-residue polypeptide: 2-hydroxy-3-keto-5-methylthiopentenyl-1-phosphate phosphatase (219 aa).

The protein belongs to the HAD-like hydrolase superfamily. MtnX family.

It catalyses the reaction 2-hydroxy-5-methylsulfanyl-3-oxopent-1-enyl phosphate + H2O = 1,2-dihydroxy-5-(methylsulfanyl)pent-1-en-3-one + phosphate. Its pathway is amino-acid biosynthesis; L-methionine biosynthesis via salvage pathway; L-methionine from S-methyl-5-thio-alpha-D-ribose 1-phosphate: step 4/6. In terms of biological role, dephosphorylates 2-hydroxy-3-keto-5-methylthiopentenyl-1-phosphate (HK-MTPenyl-1-P) yielding 1,2-dihydroxy-3-keto-5-methylthiopentene (DHK-MTPene). The polypeptide is 2-hydroxy-3-keto-5-methylthiopentenyl-1-phosphate phosphatase (Bacillus cereus (strain ZK / E33L)).